The sequence spans 272 residues: Probable nitrilase C965.09 (272 aa).

In terms of domain architecture, CN hydrolase spans alanine 3–leucine 244. The active-site Proton acceptor is the glutamate 45. Lysine 118 (proton donor) is an active-site residue. Cysteine 150 acts as the Nucleophile in catalysis.

The protein belongs to the carbon-nitrogen hydrolase superfamily.

The protein localises to the cytoplasm. It localises to the nucleus. This chain is Probable nitrilase C965.09, found in Schizosaccharomyces pombe (strain 972 / ATCC 24843) (Fission yeast).